The sequence spans 508 residues: UBX domain-containing protein 4 (508 aa).

An interaction with UBQLN1 region spans residues 1 to 200 (MLWFQGAIPA…PTEDLTVRVE (200 aa)). Over 1 to 413 (MLWFQGAIPA…VHSSSGDFWT (413 aa)) the chain is Cytoplasmic. Positions 117–199 (GEASLANGSQ…RPTEDLTVRV (83 aa)) are disordered. A compositionally biased stretch (polar residues) spans 122-190 (ANGSQSEGSV…QEPSGCSNQR (69 aa)). One can recognise a UBX domain in the interval 315 to 393 (ERSTVARIQF…ELAPSASVVL (79 aa)). Residues 414-434 (LLGTVLYPFLAIWRLISNFLF) lie within the membrane without spanning it. The Cytoplasmic portion of the chain corresponds to 435–508 (SNPPPAQTSV…TWNGNSTQQM (74 aa)). Positions 450-459 (ETSNLASSSN) are enriched in polar residues. Positions 450-508 (ETSNLASSSNSEKREPVRKRVLEKRGEDFKKEGKIYRLRTQDDGEDENNTWNGNSTQQM) are disordered. The span at 460–491 (SEKREPVRKRVLEKRGEDFKKEGKIYRLRTQD) shows a compositional bias: basic and acidic residues. Thr-489 carries the phosphothreonine modification. Polar residues predominate over residues 498–508 (NTWNGNSTQQM).

Directly interacts with VCP. Interacts with UBQLN1. Forms a complex with VCP and UBQLN1.

The protein resides in the endoplasmic reticulum membrane. The protein localises to the nucleus envelope. Functionally, involved in endoplasmic reticulum-associated protein degradation (ERAD). Acts as a platform to recruit both UBQLN1 and VCP to the ER during ERAD. The chain is UBX domain-containing protein 4 (UBXN4) from Bos taurus (Bovine).